Here is a 134-residue protein sequence, read N- to C-terminus: Holo-[acyl-carrier-protein] synthase (134 aa).

Positions 8 and 57 each coordinate Mg(2+).

The protein belongs to the P-Pant transferase superfamily. AcpS family. It depends on Mg(2+) as a cofactor.

The protein resides in the cytoplasm. It carries out the reaction apo-[ACP] + CoA = holo-[ACP] + adenosine 3',5'-bisphosphate + H(+). Its function is as follows. Transfers the 4'-phosphopantetheine moiety from coenzyme A to a Ser of acyl-carrier-protein. The sequence is that of Holo-[acyl-carrier-protein] synthase from Brucella abortus (strain S19).